Consider the following 147-residue polypeptide: Large ribosomal subunit protein bL9 (147 aa).

The protein belongs to the bacterial ribosomal protein bL9 family.

Binds to the 23S rRNA. The protein is Large ribosomal subunit protein bL9 of Campylobacter fetus subsp. fetus (strain 82-40).